Here is a 771-residue protein sequence, read N- to C-terminus: MLVQDRAAPSPAKPPKSQIRELPTHQQIRRRFSEPKNLDFSTWFSENLSRIAVFSLLIVTIVAFFFLYNTTDTASLLCFQSQSTQFLQSLSRPQIKWNSIPVVPDKTSPYANFQTEKWIVVSVTKYPTEELKSLVKIRGWQVLAIGNSATPKDWSLKGSIFLSLDAQAELGYRVLDHLPYDSFVRKSVGYLFAIQHGAKKIYDADDRGEVIDGDLGKHFDVELVGLDSKQEPILQYSHENPNRTVVNPYIHFGQRSVWPRGLPLENVGEINHEEYYTEVFGGKQFIQQGISNGLPDVDSVFYFTRKTTLEAFDIRFDEHSPKVALPQGVMVPVNSFNTLYHSSAFWGLMLPVSVSSMASDVLRGYWGQRLLWELGGYVAVYPPTAHRFDRIEAYPFVEEKDLHVNVGRLIKFLLAWRSEKHSFFETVLDLSFAMAEEGFWTEQDLKFTAAWLQDLIAVGYQQPRLMSLELDRPRASIGHGDRKEFVPRKLPSVHLGVEETGTVSTEIGNLIRWRKNFGNVVLVMFCNGPVERTALEWRLLYGRIFKTVVILSSQKNSDLYVEEAKLDHIYKHLPKIFDRYSSAEGFLFVEDDTVLNYWNLLQADKSKIWTTDKVSKSWTSVKPTGNSDWFSVQAELVKKTVSTMPAHFQVNYKDATKNNHETLTVCSSEVFYVPKRLVTDFIDLVDLVGDMDLHYKVAVPMFFLSMDSPQNFDPVLGSMVYKRKSASFNTSSSLYSAKAPAVHPWSISSEQDFIKLVQQMAEGDPLLMELV.

Residues 1 to 23 form a disordered region; sequence MLVQDRAAPSPAKPPKSQIRELP. At 1 to 50 the chain is on the cytoplasmic side; the sequence is MLVQDRAAPSPAKPPKSQIRELPTHQQIRRRFSEPKNLDFSTWFSENLSR. A helical transmembrane segment spans residues 51-71; it reads IAVFSLLIVTIVAFFFLYNTT. At 72-771 the chain is on the lumenal side; it reads DTASLLCFQS…EGDPLLMELV (700 aa). N-linked (GlcNAc...) asparagine glycans are attached at residues asparagine 242 and asparagine 729.

Belongs to the STELLO family. Homo- and heterodimer with STL2. Interacts with CESA1, CESA3, CESA4, CESA6, CESA7 and CESA8, but not with GOT1. In terms of tissue distribution, expressed in cells that are expanding or producing secondary cell walls.

It is found in the golgi apparatus membrane. Functionally, probable glycosyltransferase regulating the assembly and trafficking of cellulose synthase complexes. This Arabidopsis thaliana (Mouse-ear cress) protein is Probable glycosyltransferase STELLO1.